A 442-amino-acid chain; its full sequence is Cell division protein FtsZ (442 aa).

Residues 18 to 22 (GGGVN), 105 to 107 (GTG), glutamate 136, arginine 140, and aspartate 184 contribute to the GTP site. A compositionally biased stretch (low complexity) spans 329–341 (AAPAAEPVQQQVP). Residues 329 to 442 (AAPAAEPVQQ…DDLDVPSFLQ (114 aa)) form a disordered region. 2 stretches are compositionally biased toward basic and acidic residues: residues 349–362 (PEKE…REEN) and 390–431 (NDRD…RDDR).

Belongs to the FtsZ family. Homodimer. Polymerizes to form a dynamic ring structure in a strictly GTP-dependent manner. Interacts directly with several other division proteins.

It localises to the cytoplasm. Functionally, essential cell division protein that forms a contractile ring structure (Z ring) at the future cell division site. The regulation of the ring assembly controls the timing and the location of cell division. One of the functions of the FtsZ ring is to recruit other cell division proteins to the septum to produce a new cell wall between the dividing cells. Binds GTP and shows GTPase activity. The protein is Cell division protein FtsZ of Corynebacterium glutamicum (strain ATCC 13032 / DSM 20300 / JCM 1318 / BCRC 11384 / CCUG 27702 / LMG 3730 / NBRC 12168 / NCIMB 10025 / NRRL B-2784 / 534).